We begin with the raw amino-acid sequence, 457 residues long: Cysteine--tRNA ligase (457 aa).

Residue cysteine 28 participates in Zn(2+) binding. The 'HIGH' region motif lies at 30–40 (MTVYDLCHIGH). Positions 209, 234, and 238 each coordinate Zn(2+). The short motif at 266–270 (KMSKS) is the 'KMSKS' region element. An ATP-binding site is contributed by lysine 269.

It belongs to the class-I aminoacyl-tRNA synthetase family. Monomer. It depends on Zn(2+) as a cofactor.

The protein resides in the cytoplasm. The enzyme catalyses tRNA(Cys) + L-cysteine + ATP = L-cysteinyl-tRNA(Cys) + AMP + diphosphate. The chain is Cysteine--tRNA ligase from Chromobacterium violaceum (strain ATCC 12472 / DSM 30191 / JCM 1249 / CCUG 213 / NBRC 12614 / NCIMB 9131 / NCTC 9757 / MK).